A 346-amino-acid polypeptide reads, in one-letter code: Putative isoaspartyl peptidase/L-asparaginase (346 aa).

Threonine 207 acts as the Nucleophile in catalysis. Substrate is bound by residues 235–238 (RVGD) and 257–260 (TGTG).

This sequence belongs to the Ntn-hydrolases family. As to quaternary structure, heterodimer of an alpha and beta chain produced by autocleavage. Cleaved into an alpha and beta chain by autocatalysis; this activates the enzyme. The N-terminal residue of the beta subunit is responsible for the nucleophile hydrolase activity.

The enzyme catalyses Cleavage of a beta-linked Asp residue from the N-terminus of a polypeptide.. It catalyses the reaction L-asparagine + H2O = L-aspartate + NH4(+). In terms of biological role, has both L-asparaginase and beta-aspartyl peptidase activity. Does not have aspartylglucosaminidase activity and is inactive toward GlcNAc-L-Asn. Likewise, has no activity toward glutamine. The protein is Putative isoaspartyl peptidase/L-asparaginase of Dictyostelium discoideum (Social amoeba).